A 529-amino-acid chain; its full sequence is Lanosterol 14-alpha demethylase (529 aa).

C468 contributes to the heme binding site.

This sequence belongs to the cytochrome P450 family. Heme is required as a cofactor.

The protein resides in the membrane. It carries out the reaction a 14alpha-methyl steroid + 3 reduced [NADPH--hemoprotein reductase] + 3 O2 = a Delta(14) steroid + formate + 3 oxidized [NADPH--hemoprotein reductase] + 4 H2O + 4 H(+). The catalysed reaction is a 14alpha-methyl steroid + reduced [NADPH--hemoprotein reductase] + O2 = a 14alpha-hydroxymethyl steroid + oxidized [NADPH--hemoprotein reductase] + H2O + H(+). The enzyme catalyses a 14alpha-hydroxymethyl steroid + reduced [NADPH--hemoprotein reductase] + O2 = a 14alpha-formyl steroid + oxidized [NADPH--hemoprotein reductase] + 2 H2O + H(+). It catalyses the reaction a 14alpha-formyl steroid + reduced [NADPH--hemoprotein reductase] + O2 = a Delta(14) steroid + formate + oxidized [NADPH--hemoprotein reductase] + H2O + 2 H(+). It carries out the reaction lanosterol + 3 reduced [NADPH--hemoprotein reductase] + 3 O2 = 4,4-dimethyl-5alpha-cholesta-8,14,24-trien-3beta-ol + formate + 3 oxidized [NADPH--hemoprotein reductase] + 4 H2O + 4 H(+). The catalysed reaction is lanosterol + reduced [NADPH--hemoprotein reductase] + O2 = 32-hydroxylanosterol + oxidized [NADPH--hemoprotein reductase] + H2O + H(+). The enzyme catalyses 32-hydroxylanosterol + reduced [NADPH--hemoprotein reductase] + O2 = 32-oxolanosterol + oxidized [NADPH--hemoprotein reductase] + 2 H2O + H(+). It catalyses the reaction 32-oxolanosterol + reduced [NADPH--hemoprotein reductase] + O2 = 4,4-dimethyl-5alpha-cholesta-8,14,24-trien-3beta-ol + formate + oxidized [NADPH--hemoprotein reductase] + H2O + 2 H(+). It carries out the reaction eburicol + 3 reduced [NADPH--hemoprotein reductase] + 3 O2 = 14-demethyleburicol + formate + 3 oxidized [NADPH--hemoprotein reductase] + 4 H2O + 4 H(+). The catalysed reaction is eburicol + reduced [NADPH--hemoprotein reductase] + O2 = 32-hydroxyeburicol + oxidized [NADPH--hemoprotein reductase] + H2O + H(+). The enzyme catalyses 32-hydroxyeburicol + reduced [NADPH--hemoprotein reductase] + O2 = 32-oxoeburicol + oxidized [NADPH--hemoprotein reductase] + 2 H2O + H(+). It catalyses the reaction 32-oxoeburicol + reduced [NADPH--hemoprotein reductase] + O2 = 14-demethyleburicol + formate + oxidized [NADPH--hemoprotein reductase] + H2O + 2 H(+). Its pathway is steroid biosynthesis; zymosterol biosynthesis; zymosterol from lanosterol: step 1/6. Sterol 14alpha-demethylase that plays a critical role in the third module of ergosterol biosynthesis pathway, being ergosterol the major sterol component in fungal membranes that participates in a variety of functions. The third module or late pathway involves the ergosterol synthesis itself through consecutive reactions that mainly occur in the endoplasmic reticulum (ER) membrane. In filamentous fungi, during the initial step of this module, lanosterol (lanosta-8,24-dien-3beta-ol) can be metabolized to eburicol. Sterol 14alpha-demethylase catalyzes the three-step oxidative removal of the 14alpha-methyl group (C-32) of both these sterols in the form of formate, and converts eburicol and lanosterol to 14-demethyleburicol (4,4,24-trimethylergosta-8,14,24(28)-trienol) and 4,4-dimethyl-5alpha-cholesta-8,14,24-trien-3beta-ol, respectively, which are further metabolized by other enzymes in the pathway to ergosterol. Can also use substrates not intrinsic to fungi, such as 24,25-dihydrolanosterol (DHL), producing 4,4-dimethyl-8,14-cholestadien-3-beta-ol, but at lower rates than the endogenous substrates. The sequence is that of Lanosterol 14-alpha demethylase (ERG11) from Eremothecium gossypii (strain ATCC 10895 / CBS 109.51 / FGSC 9923 / NRRL Y-1056) (Yeast).